The primary structure comprises 582 residues: ATP-dependent lipid A-core flippase (582 aa).

Transmembrane regions (helical) follow at residues 16 to 36 (LWPTIAPFKAGLIVAGIALIL), 64 to 84 (LLWMPLVVIGLMILRGITSYI), 153 to 173 (IIGLFIMMFYYSWQLSIILVV), 253 to 273 (PIIQLIASLALAFVLYAASFP), and 275 to 295 (VMDSLTAGTITVVFSSMIALM). In terms of domain architecture, ABC transmembrane type-1 spans 28–310 (IVAGIALILN…LTNVNAQFQR (283 aa)). Residues 342–578 (LEFRNVTFTY…HGVYAQLHKM (237 aa)) enclose the ABC transporter domain. 376 to 383 (GRSGSGKS) contributes to the ATP binding site.

It belongs to the ABC transporter superfamily. Lipid exporter (TC 3.A.1.106) family. As to quaternary structure, homodimer.

It is found in the cell inner membrane. It carries out the reaction ATP + H2O + lipid A-core oligosaccharideSide 1 = ADP + phosphate + lipid A-core oligosaccharideSide 2.. In terms of biological role, involved in lipopolysaccharide (LPS) biosynthesis. Translocates lipid A-core from the inner to the outer leaflet of the inner membrane. Transmembrane domains (TMD) form a pore in the inner membrane and the ATP-binding domain (NBD) is responsible for energy generation. This is ATP-dependent lipid A-core flippase from Salmonella choleraesuis (strain SC-B67).